The chain runs to 358 residues: uncharacterized protein (358 aa).

One can recognise an EF-hand domain in the interval 229 to 264 (KQLHEFKLAFDYFDQEKNGWLDYEHFELCLKSQGYN). The Ca(2+) site is built by D242, N246, W248, and H253.

This is an uncharacterized protein from Caenorhabditis elegans.